The following is a 35-amino-acid chain: FNPVGVAFKGNNGKYLSRIHRSGIDYTEFAKDNTD.

In terms of tissue distribution, expressed in tentacles.

It is found in the nematocyst. Its subcellular location is the secreted. Functionally, peptide with unknown function. Does not exhibit antimicrobial activity against Escherichia coli and Staphylococcus aureus. This Heliofungia actiniformis (Mushroom coral) protein is Peptide Hact-3.